Consider the following 185-residue polypeptide: MIKDIIQNAEEKMKKTISVLKSDLSTMKAGRANPTMLDRIHVEYYGSMCPLSQVANVSAPEPRVLMITPWEKPLLKEIEKAILKSDLGLNPSSDGSIIRLVIPELTEETRKTLVKNVKKTGEEAKVAIRSIRKTANDKIKALKKDEDLSEDQVKKAEDEVQKKTDAVVKEIDSIIAAKEKEVLSV.

Belongs to the RRF family.

The protein resides in the cytoplasm. In terms of biological role, responsible for the release of ribosomes from messenger RNA at the termination of protein biosynthesis. May increase the efficiency of translation by recycling ribosomes from one round of translation to another. This Clostridium beijerinckii (strain ATCC 51743 / NCIMB 8052) (Clostridium acetobutylicum) protein is Ribosome-recycling factor.